Here is a 395-residue protein sequence, read N- to C-terminus: NADH-quinone oxidoreductase subunit D (395 aa).

This sequence belongs to the complex I 49 kDa subunit family. NDH-1 is composed of 14 different subunits. Subunits NuoB, C, D, E, F, and G constitute the peripheral sector of the complex.

It is found in the cell inner membrane. The catalysed reaction is a quinone + NADH + 5 H(+)(in) = a quinol + NAD(+) + 4 H(+)(out). Functionally, NDH-1 shuttles electrons from NADH, via FMN and iron-sulfur (Fe-S) centers, to quinones in the respiratory chain. The immediate electron acceptor for the enzyme in this species is believed to be ubiquinone. Couples the redox reaction to proton translocation (for every two electrons transferred, four hydrogen ions are translocated across the cytoplasmic membrane), and thus conserves the redox energy in a proton gradient. This is NADH-quinone oxidoreductase subunit D from Anaplasma phagocytophilum (strain HZ).